A 529-amino-acid polypeptide reads, in one-letter code: MVLEVPQTERVNDVDVFLSTQDGQIQRPKGPNCRHPVRQKCTNCLPVDPFDEEYLKEKDIKHMSFHAHVRKLLGSQGKGTTLKKPLENFRCSLKPNCDAHKPFPKGICTKCKPQVVTLNRQKFRHVDNIQIENQELVNQFLDYWRLSGHQRVGFLIGQYQPHLEVPLGIKATVAAIYEPPQHCREDGIEFLEDKNQKTIDNLLEMLGLQRVGWIFTDCWTANSAEGTVHYTRHKDSFFLSAEECITAAMLQNQHPNITEYSMDRHYGSKFVTVVASGDESMHVNFHGYQVSNQCAAMVEADILCPTLYTPELAYVRETPLSEEHYITDVQFSMKNEYGAEVMKNGRPLPVEYLLVDVPAGMPKEPHYTFHVGTSNKSKSAKFNVENRQAIGQLQGGANLIQYSSEFSKNQFLEQATNFHFLLYLVTNDQVQISDEWMKRLCDAVKAQDRGTAMEWAQECEDWHQLMALAHANGGSGNDVSDIPVIPNGDPFSGSSSGGSGGAVWNCGHCTFQNEAARQDCSMCGLPAAD.

An MPN domain is found at 129-266 (IQIENQELVN…ITEYSMDRHY (138 aa)). The segment at 499–529 (SGGAVWNCGHCTFQNEAARQDCSMCGLPAAD) adopts a RanBP2-type zinc-finger fold.

It belongs to the NPL4 family. As to quaternary structure, forms a complex composed of ubxn-3, ufd-1, npl-4.1 and cdc-48.1; within the complex, interacts with ufd-1 and ubxn-3. Interacts with ufd-1. Interacts with elc-1/elongin C; the interaction may mediate the interaction between the npl-4-ufd-1-cdc-48 complex and the E3 ubiquitin ligase cul-2 complex.

The protein localises to the cytoplasm. It localises to the nucleus. Functionally, in association with ufd-1 and ATPase cdc-48.1 and/or cdc-48.2, involved in the cytoplasmic elimination of misfolded proteins exported from the ER. This pathway, known as ERAD, prevents the activation of the unfolded protein response (UPR) caused by the accumulation of misfolded proteins in the ER. During S phase and in association with ufd-1, cdc-48.1 and/or cdc-48.2 and ubxn-3, ensures the degradation of DNA licensing factor cdt-1 after the initiation of DNA replication and thus the disassembly of the DNA replication CGM helicase complex by promoting the dissociation from chromatin of several of its components including cdc-45 and sld-5. Regulates ubxn-3 nuclear localization during S phase. This chain is Nuclear protein localization protein 4 homolog 1, found in Caenorhabditis elegans.